The following is a 1003-amino-acid chain: Translation initiation factor IF-2 (1003 aa).

The tract at residues 36–392 is disordered; it reads SSTIEPPVVK…RQKRNEYESM (357 aa). The segment covering 62–151 has biased composition (low complexity); that stretch reads AAKPAAAKPA…PKPAAAAKPA (90 aa). Pro residues-rich tracts occupy residues 178-190 and 213-230; these read DGMP…PAPK and PRPG…PGGG. Composition is skewed to gly residues over residues 231-243 and 255-271; these read PRPQ…GGQR and GNRG…GPRP. Residues 273–286 show a composition bias toward low complexity; it reads GGPRPQGGSRPQGG. A compositionally biased stretch (gly residues) spans 329–372; that stretch reads GKGGRGGQAGGGAGGGFNRGGGTGGGAGRGGRRGGTAGAFGRPG. A compositionally biased stretch (basic residues) spans 376 to 385; the sequence is RRGRKSKRQK. Positions 498 to 670 constitute a tr-type G domain; sequence KRPPVVTVMG…VCLTADAELD (173 aa). Positions 507 to 514 are G1; the sequence is GHVDHGKT. Residue 507-514 coordinates GTP; sequence GHVDHGKT. The G2 stretch occupies residues 532 to 536; it reads GITQG. The tract at residues 557–560 is G3; it reads DTPG. GTP is bound by residues 557–561 and 611–614; these read DTPGH and NKID. The interval 611 to 614 is G4; that stretch reads NKID. Residues 647 to 649 form a G5 region; sequence SAK.

This sequence belongs to the TRAFAC class translation factor GTPase superfamily. Classic translation factor GTPase family. IF-2 subfamily.

The protein localises to the cytoplasm. One of the essential components for the initiation of protein synthesis. Protects formylmethionyl-tRNA from spontaneous hydrolysis and promotes its binding to the 30S ribosomal subunits. Also involved in the hydrolysis of GTP during the formation of the 70S ribosomal complex. The sequence is that of Translation initiation factor IF-2 from Corynebacterium glutamicum (strain R).